Reading from the N-terminus, the 523-residue chain is Exodeoxyribonuclease 7 large subunit (523 aa).

Residues 502–523 are disordered; that stretch reads PGASPAARTRAGKAKADQGSLF.

This sequence belongs to the XseA family. In terms of assembly, heterooligomer composed of large and small subunits.

The protein resides in the cytoplasm. It carries out the reaction Exonucleolytic cleavage in either 5'- to 3'- or 3'- to 5'-direction to yield nucleoside 5'-phosphates.. Its function is as follows. Bidirectionally degrades single-stranded DNA into large acid-insoluble oligonucleotides, which are then degraded further into small acid-soluble oligonucleotides. In Rhodospirillum centenum (strain ATCC 51521 / SW), this protein is Exodeoxyribonuclease 7 large subunit.